Consider the following 710-residue polypeptide: Phosphoribosylformylglycinamidine synthase subunit PurL (710 aa).

The active site involves His-36. Residues Tyr-39 and Lys-80 each contribute to the ATP site. Residue Glu-82 participates in Mg(2+) binding. Residues 83–86 (SHNH) and Arg-105 each bind substrate. His-84 (proton acceptor) is an active-site residue. Asp-106 is a Mg(2+) binding site. Gln-226 is a substrate binding site. Asp-252 lines the Mg(2+) pocket. 294-296 (ETQ) contributes to the substrate binding site. Asp-470 and Gly-507 together coordinate ATP. A substrate-binding site is contributed by Ser-510.

It belongs to the FGAMS family. As to quaternary structure, monomer. Part of the FGAM synthase complex composed of 1 PurL, 1 PurQ and 2 PurS subunits.

It is found in the cytoplasm. The catalysed reaction is N(2)-formyl-N(1)-(5-phospho-beta-D-ribosyl)glycinamide + L-glutamine + ATP + H2O = 2-formamido-N(1)-(5-O-phospho-beta-D-ribosyl)acetamidine + L-glutamate + ADP + phosphate + H(+). The protein operates within purine metabolism; IMP biosynthesis via de novo pathway; 5-amino-1-(5-phospho-D-ribosyl)imidazole from N(2)-formyl-N(1)-(5-phospho-D-ribosyl)glycinamide: step 1/2. Its function is as follows. Part of the phosphoribosylformylglycinamidine synthase complex involved in the purines biosynthetic pathway. Catalyzes the ATP-dependent conversion of formylglycinamide ribonucleotide (FGAR) and glutamine to yield formylglycinamidine ribonucleotide (FGAM) and glutamate. The FGAM synthase complex is composed of three subunits. PurQ produces an ammonia molecule by converting glutamine to glutamate. PurL transfers the ammonia molecule to FGAR to form FGAM in an ATP-dependent manner. PurS interacts with PurQ and PurL and is thought to assist in the transfer of the ammonia molecule from PurQ to PurL. The chain is Phosphoribosylformylglycinamidine synthase subunit PurL from Sulfolobus acidocaldarius (strain ATCC 33909 / DSM 639 / JCM 8929 / NBRC 15157 / NCIMB 11770).